Consider the following 1252-residue polypeptide: DNA-directed RNA polymerase subunit beta (1252 aa).

This sequence belongs to the RNA polymerase beta chain family. The RNAP catalytic core consists of 2 alpha, 1 beta, 1 beta' and 1 omega subunit. When a sigma factor is associated with the core the holoenzyme is formed, which can initiate transcription.

The enzyme catalyses RNA(n) + a ribonucleoside 5'-triphosphate = RNA(n+1) + diphosphate. Functionally, DNA-dependent RNA polymerase catalyzes the transcription of DNA into RNA using the four ribonucleoside triphosphates as substrates. This is DNA-directed RNA polymerase subunit beta from Chlamydia abortus (strain DSM 27085 / S26/3) (Chlamydophila abortus).